The chain runs to 178 residues: Hypoxanthine phosphoribosyltransferase (178 aa).

Diphosphate is bound by residues R43 and G44. Residue E99 coordinates GMP. Position 99 (E99) interacts with IMP. Mg(2+) is bound by residues E99 and D100. Residue D103 is the Proton acceptor of the active site. Residues 103-108, K131, and D159 contribute to the GMP site; that span reads DSGNTL. IMP is bound by residues 103–108 and K131; that span reads DSGNTL. R165 contacts diphosphate.

Belongs to the purine/pyrimidine phosphoribosyltransferase family. Homotetramer. Mg(2+) serves as cofactor.

It is found in the cytoplasm. The catalysed reaction is IMP + diphosphate = hypoxanthine + 5-phospho-alpha-D-ribose 1-diphosphate. It catalyses the reaction GMP + diphosphate = guanine + 5-phospho-alpha-D-ribose 1-diphosphate. It participates in purine metabolism; IMP biosynthesis via salvage pathway; IMP from hypoxanthine: step 1/1. In terms of biological role, purine salvage pathway enzyme which catalyzes the transfer of the ribosyl-5-phosphate group from 5-phospho-alpha-D-ribose 1-diphosphate (PRPP) to the N9 position of hypoxanthine to yield IMP (inosine 5'-monophosphate). To a lesser extent, can also act on guanine leading to GMP, but shows a highly less efficient activity with xanthine. In Salmonella typhimurium (strain LT2 / SGSC1412 / ATCC 700720), this protein is Hypoxanthine phosphoribosyltransferase (hpt).